The chain runs to 280 residues: Ribosomal RNA-processing protein 7 homolog A (280 aa).

The span at 1-10 (MVSRRKKRKA) shows a compositional bias: basic residues. The disordered stretch occupies residues 1-24 (MVSRRKKRKAGGHEESIPSPPGYS). The RRM domain occupies 59–159 (RTLFILNVPP…SGIHKWISDY (101 aa)). The residue at position 99 (Ser-99) is a Phosphoserine.

The protein belongs to the RRP7 family. As to quaternary structure, part of the small subunit (SSU) processome, composed of more than 70 proteins and the RNA chaperone small nucleolar RNA (snoRNA) U3. Interacts with NOL6; required for NOL6 localization to nucleolus.

The protein localises to the nucleus. It is found in the nucleolus. It localises to the cell projection. Its subcellular location is the cilium. The protein resides in the cytoplasm. The protein localises to the cytoskeleton. It is found in the microtubule organizing center. It localises to the centrosome. Its function is as follows. Nucleolar protein that is involved in ribosomal RNA (rRNA) processing. Also plays a role in primary cilia resorption, and cell cycle progression in neurogenesis and neocortex development. Part of the small subunit (SSU) processome, first precursor of the small eukaryotic ribosomal subunit. During the assembly of the SSU processome in the nucleolus, many ribosome biogenesis factors, an RNA chaperone and ribosomal proteins associate with the nascent pre-rRNA and work in concert to generate RNA folding, modifications, rearrangements and cleavage as well as targeted degradation of pre-ribosomal RNA by the RNA exosome. The polypeptide is Ribosomal RNA-processing protein 7 homolog A (Rrp7a) (Mus musculus (Mouse)).